The primary structure comprises 384 residues: Glutamate 5-kinase (384 aa).

Lys24 lines the ATP pocket. Substrate-binding residues include Ser64, Asp149, and Asn161. ATP-binding positions include 181 to 182 (TD) and 223 to 229 (TGGMRTK). The region spanning 288 to 370 (PGAILIDAGA…RDIQTLLGYT (83 aa)) is the PUA domain.

It belongs to the glutamate 5-kinase family.

The protein resides in the cytoplasm. It catalyses the reaction L-glutamate + ATP = L-glutamyl 5-phosphate + ADP. It functions in the pathway amino-acid biosynthesis; L-proline biosynthesis; L-glutamate 5-semialdehyde from L-glutamate: step 1/2. Functionally, catalyzes the transfer of a phosphate group to glutamate to form L-glutamate 5-phosphate. The protein is Glutamate 5-kinase of Xylella fastidiosa (strain M12).